We begin with the raw amino-acid sequence, 534 residues long: Cytochrome P450 monooxygenase vrtK (534 aa).

Cysteine 448 contacts heme.

This sequence belongs to the cytochrome P450 family. Requires heme as cofactor.

The protein operates within secondary metabolite biosynthesis; terpenoid biosynthesis. Cytochrome P450 monooxygenase; part of the gene cluster that mediates the biosynthesis of viridicatumtoxin, a tetracycline-like fungal meroterpenoid with a unique, fused spirobicyclic ring system. The first step of the pathway is the production of the malonamoyl-CoA starter unit for the polyketide synthase vrtA. The aldolase vrtJ may be involved in the synthesis of the malonamate substrate for malonamoyl-CoA synthetase vrtB. The polyketide synthase vrtA then may utilize the malonamoyl-CoA starter unit, followed by sequential condensation of eight malonyl-CoA units to form the polyketide backbone. The cyclization of the last ring could be mediated by the lactamase-like protein vrtG. The proposed post-PKS tailoring steps are a hydroxylation at C5 catalyzed the cytochrome P450 monooxygenase vrtE, a hydroxylation at C12a catalyzed by VrtH and/or VrtI, and an O-methylation by the O-methyltransferase vrtF. VrtC is then proposed to catalyze the transfer of a geranyl group synthesized by vrtD to the aromatic C ring of the tetracyclic polyketide intermediate of viridicatumtoxin to yield previridicatumtoxin. Finally, the cytochrome P450 monooxygenase vrtK catalyzes the spirocyclization of the geranyl moiety of previridicatumtoxin to afford viridicatumtoxin. This is Cytochrome P450 monooxygenase vrtK from Penicillium aethiopicum.